The chain runs to 88 residues: Small ribosomal subunit protein uS17 (88 aa).

The protein belongs to the universal ribosomal protein uS17 family. In terms of assembly, part of the 30S ribosomal subunit.

In terms of biological role, one of the primary rRNA binding proteins, it binds specifically to the 5'-end of 16S ribosomal RNA. This Xylella fastidiosa (strain M23) protein is Small ribosomal subunit protein uS17.